We begin with the raw amino-acid sequence, 143 residues long: Large ribosomal subunit protein uL11 (143 aa).

The protein belongs to the universal ribosomal protein uL11 family. Part of the ribosomal stalk of the 50S ribosomal subunit. Interacts with L10 and the large rRNA to form the base of the stalk. L10 forms an elongated spine to which L12 dimers bind in a sequential fashion forming a multimeric L10(L12)X complex. Post-translationally, one or more lysine residues are methylated.

Its function is as follows. Forms part of the ribosomal stalk which helps the ribosome interact with GTP-bound translation factors. This chain is Large ribosomal subunit protein uL11, found in Halorhodospira halophila (strain DSM 244 / SL1) (Ectothiorhodospira halophila (strain DSM 244 / SL1)).